Here is a 415-residue protein sequence, read N- to C-terminus: Adenosylhomocysteinase (415 aa).

T53, D124, and E147 together coordinate substrate. 148–150 (TTT) contributes to the NAD(+) binding site. Residues K177 and D181 each contribute to the substrate site. NAD(+) is bound by residues N182, 211–216 (GYGWVG), E234, N269, 290–292 (SGH), and N337.

The protein belongs to the adenosylhomocysteinase family. NAD(+) serves as cofactor.

Its subcellular location is the cytoplasm. It catalyses the reaction S-adenosyl-L-homocysteine + H2O = L-homocysteine + adenosine. It functions in the pathway amino-acid biosynthesis; L-homocysteine biosynthesis; L-homocysteine from S-adenosyl-L-homocysteine: step 1/1. In terms of biological role, may play a key role in the regulation of the intracellular concentration of adenosylhomocysteine. The polypeptide is Adenosylhomocysteinase (Sulfolobus acidocaldarius (strain ATCC 33909 / DSM 639 / JCM 8929 / NBRC 15157 / NCIMB 11770)).